A 119-amino-acid chain; its full sequence is Large ribosomal subunit protein uL14 (119 aa).

It belongs to the universal ribosomal protein uL14 family. In terms of assembly, part of the 50S ribosomal subunit. Forms a cluster with proteins L3 and L19. In the 70S ribosome, L14 and L19 interact and together make contacts with the 16S rRNA in bridges B5 and B8.

Its function is as follows. Binds to 23S rRNA. Forms part of two intersubunit bridges in the 70S ribosome. This is Large ribosomal subunit protein uL14 from Anaplasma phagocytophilum (strain HZ).